The primary structure comprises 64 residues: Micrurotoxin 2 (64 aa).

Intrachain disulfides connect Cys3/Cys24, Cys6/Cys11, Cys17/Cys41, Cys45/Cys57, and Cys58/Cys63.

It belongs to the three-finger toxin family. Ancestral subfamily. Expressed by the venom gland.

It is found in the secreted. Functionally, allosteric modulator of the GABA(A) receptor (GABR), possibly increasing receptor affinity for the agonist, thus enhancing receptor opening and macroscopic desensitization. In vivo, intracerebroventricular injection into mice results in periods of reduced basal activity, followed by bursts of intense seizures and death. In Micrurus mipartitus (Red-tailed coral snake), this protein is Micrurotoxin 2.